A 210-amino-acid chain; its full sequence is Glutathione S-transferase 4 (210 aa).

Residues 1-80 (MDFYYLPLSA…YLVEKYGKQD (80 aa)) form the GST N-terminal domain. Residues S9, 50–52 (HTI), and 64–66 (ESR) contribute to the glutathione site. The GST C-terminal domain maps to 87–208 (CPKKRALINQ…AGALEMKTLI (122 aa)).

It belongs to the GST superfamily. Theta family. Homodimer.

The catalysed reaction is RX + glutathione = an S-substituted glutathione + a halide anion + H(+). Conjugation of reduced glutathione to a wide number of exogenous and endogenous hydrophobic electrophiles. In Musca domestica (House fly), this protein is Glutathione S-transferase 4 (Gst4).